Here is a 900-residue protein sequence, read N- to C-terminus: MENYEALVGFDLCNTPLSSVAQKIMSAMHSGDLVDSKTWGKSTETMEVINKSSVKYSVQLEDRKTQSPEKKDLKSLRSQTSRGSAKLSPQSFSVRLTDQLSADQKQKSISSLTLSSCLIPQYNQEASVLQKKGHKRKHFLMENINNENKGSINLKRKHITYNNLSEKTSKQMALEEDTDDAEGYLNSGNSGALKKHFCDIRHLDDWAKSQLIEMLKQAAALVITVMYTDGSTQLGADQTPVSSVRGIVVLVKRQAEGGHGCPDAPACGPVLEGFVSDDPCIYIQIEHSAIWDQEQEAHQQFARNVLFQTMKCKCPVICFNAKDFVRIVLQFFGNDGSWKHVADFIGLDPRIAAWLIDPSDATPSFEDLVEKYCEKSITVKVNSTYGNSSRNIVNQNVRENLKTLYRLTMDLCSKLKDYGLWQLFRTLELPLIPILAVMESHAIQVNKEEMEKTSALLGARLKELEQEAHFVAGERFLITSNNQLREILFGKLKLHLLSQRNSLPRTGLQKYPSTSEAVLNALRDLHPLPKIILEYRQVHKIKSTFVDGLLACMKKGSISSTWNQTGTVTGRLSAKHPNIQGISKHPIQITTPKNFKGKEDKILTISPRAMFVSSKGHTFLAADFSQIELRILTHLSGDPELLKLFQESERDDVFSTLTSQWKDVPVEQVTHADREQTKKVVYAVVYGAGKERLAACLGVPIQEAAQFLESFLQKYKKIKDFARAAIAQCHQTGCVVSIMGRRRPLPRIHAHDQQLRAQAERQAVNFVVQGSAADLCKLAMIHVFTAVAASHTLTARLVAQIHDELLFEVEDPQIPECAALVRRTMESLEQVQALELQLQVPLKVSLSAGRSWGHLVPLQEAWGPPPGPCRTESPSNSLAAPGSPASTQPPPLHFSPSFCL.

Residues 60–75 (LEDRKTQSPEKKDLKS) are compositionally biased toward basic and acidic residues. Disordered regions lie at residues 60 to 90 (LEDR…LSPQ) and 863 to 900 (GPPP…SFCL). Over residues 76 to 90 (LRSQTSRGSAKLSPQ) the composition is skewed to polar residues.

This sequence belongs to the DNA polymerase type-A family. Interacts with FANCD2, FANCI, PCNA, RAD51 and HELQ. Highly expressed in testis and heart. Weakly expressed in skeletal muscle.

The protein localises to the nucleus. It catalyses the reaction DNA(n) + a 2'-deoxyribonucleoside 5'-triphosphate = DNA(n+1) + diphosphate. Its activity is regulated as follows. Inhibited by ddTTP. DNA polymerase with very low fidelity that catalyzes considerable misincorporation by inserting dTTP opposite a G template, and dGTP opposite a T template. Is the least accurate of the DNA polymerase A family (i.e. POLG, POLN and POLQ). Can perform accurate translesion DNA synthesis (TLS) past a 5S-thymine glycol. Can perform efficient strand displacement past a nick or a gap and gives rise to an amount of product similar to that on non-damaged template. Has no exonuclease activity. Error-prone DNA polymerase that preferentially misincorporates dT regardless of template sequence. May play a role in TLS during interstrand cross-link (ICL) repair. May be involved in TLS when genomic replication is blocked by extremely large major groove DNA lesions. May function in the bypass of some DNA-protein and DNA-DNA cross-links. May have a role in cellular tolerance to DNA cross-linking agents. Involved in the repair of DNA cross-links and double-strand break (DSB) resistance. Participates in FANCD2-mediated repair. Forms a complex with HELQ helicase that participates in homologous recombination (HR) repair and is essential for cellular protection against DNA cross-links. The sequence is that of DNA polymerase nu (POLN) from Homo sapiens (Human).